Consider the following 481-residue polypeptide: MTNSVDFSGRPFHFIGIGGIGMSALAYVLAKRQFPVSGSDLRPNHITHKLESIGAHIFGRQEASNLEFFRPQVLNSQEQLAADTKSKLPQVICSTAINTNNLEYKAALELGCPVLHRSDVLAALIADYYSIAVAGTHGKTTTSSMIGYMLLEAGLDPTILVGGEVNAWEGNARLGQSQYLVAEADESDGSLVKHAPEIGIITNIELDHPDHYDTLEEVIDIFQTFAKGCKTLIGSIDCATVRDRLQPTISYSLHSDTDADYTVTNIDYRADGTTALVWERGKALGVLKLRLLSRHNLSNALAAVAVGRALGLEFGAIAKGIATFEGARRRFELRGEVDGITFIDDYAHHPSEIRVTLAAARLQARPGQRVVAIFQPHRYSRTLTFLEEFAESFTHADLVVLTDIYSAGEPNLGQITGEQLAAEIAKQHSQVVYQPTLPSVCEYLLQTLRPGDLALFLGAGNLNQVIPEVITAFCEPAKATS.

Residue 135-141 (GTHGKTT) participates in ATP binding.

Belongs to the MurCDEF family.

It localises to the cytoplasm. It catalyses the reaction UDP-N-acetyl-alpha-D-muramate + L-alanine + ATP = UDP-N-acetyl-alpha-D-muramoyl-L-alanine + ADP + phosphate + H(+). The protein operates within cell wall biogenesis; peptidoglycan biosynthesis. Its function is as follows. Cell wall formation. The sequence is that of UDP-N-acetylmuramate--L-alanine ligase from Nostoc punctiforme (strain ATCC 29133 / PCC 73102).